We begin with the raw amino-acid sequence, 322 residues long: ATP-dependent 6-phosphofructokinase (322 aa).

An ATP-binding site is contributed by Gly-12. Arg-22–Lys-26 is a binding site for ADP. ATP-binding positions include Arg-73–Ser-74 and Gly-103–Ser-106. Asp-104 is a Mg(2+) binding site. Thr-127 to Asp-129 provides a ligand contact to substrate. Residue Asp-129 is the Proton acceptor of the active site. Position 156 (Arg-156) interacts with ADP. Substrate-binding positions include Arg-164 and Met-171 to Arg-173. Residues Gly-187–Asp-189 and Lys-215–His-217 contribute to the ADP site. Substrate-binding positions include Glu-224, Arg-245, and His-251–Arg-254.

Belongs to the phosphofructokinase type A (PFKA) family. ATP-dependent PFK group I subfamily. Prokaryotic clade 'B1' sub-subfamily. As to quaternary structure, homotetramer. Mg(2+) serves as cofactor.

It is found in the cytoplasm. It carries out the reaction beta-D-fructose 6-phosphate + ATP = beta-D-fructose 1,6-bisphosphate + ADP + H(+). The protein operates within carbohydrate degradation; glycolysis; D-glyceraldehyde 3-phosphate and glycerone phosphate from D-glucose: step 3/4. Its activity is regulated as follows. Allosterically activated by ADP and other diphosphonucleosides, and allosterically inhibited by phosphoenolpyruvate. Catalyzes the phosphorylation of D-fructose 6-phosphate to fructose 1,6-bisphosphate by ATP, the first committing step of glycolysis. The polypeptide is ATP-dependent 6-phosphofructokinase (Fusobacterium nucleatum subsp. nucleatum (strain ATCC 25586 / DSM 15643 / BCRC 10681 / CIP 101130 / JCM 8532 / KCTC 2640 / LMG 13131 / VPI 4355)).